Here is a 224-residue protein sequence, read N- to C-terminus: Precorrin-2 dehydrogenase (224 aa).

NAD(+)-binding positions include 26-27 (SV) and 47-50 (EFSQ).

Belongs to the precorrin-2 dehydrogenase / sirohydrochlorin ferrochelatase family. As to quaternary structure, homodimer.

The catalysed reaction is precorrin-2 + NAD(+) = sirohydrochlorin + NADH + 2 H(+). It participates in porphyrin-containing compound metabolism; siroheme biosynthesis; sirohydrochlorin from precorrin-2: step 1/1. Functionally, involved in the archaeal biosynthesis of heme. Catalyzes the oxiation of precorrin-2 into sirohydroclorin. This is Precorrin-2 dehydrogenase from Methanosarcina barkeri (strain Fusaro / DSM 804).